Here is a 250-residue protein sequence, read N- to C-terminus: Beta-crystallin B1 (250 aa).

The segment covering 1–13 (MSQAAKASATTAV) has biased composition (polar residues). The segment at 1–49 (MSQAAKASATTAVNPGPDGKGKGAPSTGPAPAPGPTPVPASVPRPAAKV) is disordered. N-acetylserine is present on serine 2. The N-terminal arm stretch occupies residues 2-56 (SQAAKASATTAVNPGPDGKGKGAPSTGPAPAPGPTPVPASVPRPAAKVGDLPPGS). Positions 28–42 (GPAPAPGPTPVPASV) are enriched in pro residues. Beta/gamma crystallin 'Greek key' domains are found at residues 57–96 (YRLI…IVVS) and 97–141 (GPWV…RPIR). The interval 142-146 (MDSQE) is connecting peptide. Beta/gamma crystallin 'Greek key' domains follow at residues 147 to 188 (HKIC…TVSG) and 189 to 231 (GTWV…RRLR). Residues 233-250 (RQWHQEGCFPVLTAEPPK) are C-terminal arm.

Belongs to the beta/gamma-crystallin family. In terms of assembly, homo/heterodimer, or complexes of higher-order. The structure of beta-crystallin oligomers seems to be stabilized through interactions between the N-terminal arms. Post-translationally, specific cleavages in the N-terminal arm occur during lens maturation and give rise to truncated forms, leading to impaired oligomerization and protein insolubilization. The protease responsible for this partial degradation could be calpain II.

Functionally, crystallins are the dominant structural components of the vertebrate eye lens. In Mus musculus (Mouse), this protein is Beta-crystallin B1 (Crybb1).